Consider the following 308-residue polypeptide: Acetyl-coenzyme A carboxylase carboxyl transferase subunit beta 1 (308 aa).

One can recognise a CoA carboxyltransferase N-terminal domain in the interval 25 to 294 (VWTKCTSCEQ…PMVVSVNESP (270 aa)). Positions 29, 32, 48, and 51 each coordinate Zn(2+). The C4-type zinc finger occupies 29 to 51 (CTSCEQVLYHAELERNLEVCPKC). Residues 289–308 (SVNESPNEEPYSVPEADEKG) form a disordered region.

It belongs to the AccD/PCCB family. Acetyl-CoA carboxylase is a heterohexamer composed of biotin carboxyl carrier protein (AccB), biotin carboxylase (AccC) and two subunits each of ACCase subunit alpha (AccA) and ACCase subunit beta (AccD). The cofactor is Zn(2+).

Its subcellular location is the cytoplasm. The catalysed reaction is N(6)-carboxybiotinyl-L-lysyl-[protein] + acetyl-CoA = N(6)-biotinyl-L-lysyl-[protein] + malonyl-CoA. It participates in lipid metabolism; malonyl-CoA biosynthesis; malonyl-CoA from acetyl-CoA: step 1/1. Functionally, component of the acetyl coenzyme A carboxylase (ACC) complex. Biotin carboxylase (BC) catalyzes the carboxylation of biotin on its carrier protein (BCCP) and then the CO(2) group is transferred by the transcarboxylase to acetyl-CoA to form malonyl-CoA. The polypeptide is Acetyl-coenzyme A carboxylase carboxyl transferase subunit beta 1 (Vibrio campbellii (strain ATCC BAA-1116)).